Here is a 307-residue protein sequence, read N- to C-terminus: 4-hydroxythreonine-4-phosphate dehydrogenase (307 aa).

Residues His126 and Thr127 each contribute to the substrate site. A divalent metal cation is bound by residues His156, His195, and His251. Substrate contacts are provided by Lys259, Asn268, and Arg277.

The protein belongs to the PdxA family. In terms of assembly, homodimer. Zn(2+) serves as cofactor. Requires Mg(2+) as cofactor. The cofactor is Co(2+).

The protein localises to the cytoplasm. The catalysed reaction is 4-(phosphooxy)-L-threonine + NAD(+) = 3-amino-2-oxopropyl phosphate + CO2 + NADH. Its pathway is cofactor biosynthesis; pyridoxine 5'-phosphate biosynthesis; pyridoxine 5'-phosphate from D-erythrose 4-phosphate: step 4/5. Functionally, catalyzes the NAD(P)-dependent oxidation of 4-(phosphooxy)-L-threonine (HTP) into 2-amino-3-oxo-4-(phosphooxy)butyric acid which spontaneously decarboxylates to form 3-amino-2-oxopropyl phosphate (AHAP). The chain is 4-hydroxythreonine-4-phosphate dehydrogenase from Helicobacter pylori (strain ATCC 700392 / 26695) (Campylobacter pylori).